The primary structure comprises 540 residues: Glucose-6-phosphate isomerase (540 aa).

The active-site Proton donor is Glu-350. Residues His-381 and Lys-503 contribute to the active site.

It belongs to the GPI family.

It is found in the cytoplasm. It catalyses the reaction alpha-D-glucose 6-phosphate = beta-D-fructose 6-phosphate. Its pathway is carbohydrate biosynthesis; gluconeogenesis. The protein operates within carbohydrate degradation; glycolysis; D-glyceraldehyde 3-phosphate and glycerone phosphate from D-glucose: step 2/4. Its function is as follows. Catalyzes the reversible isomerization of glucose-6-phosphate to fructose-6-phosphate. In Burkholderia pseudomallei (strain 1106a), this protein is Glucose-6-phosphate isomerase.